A 955-amino-acid chain; its full sequence is Glycine dehydrogenase (decarboxylating) (955 aa).

Lysine 702 is modified (N6-(pyridoxal phosphate)lysine).

Belongs to the GcvP family. As to quaternary structure, the glycine cleavage system is composed of four proteins: P, T, L and H. Pyridoxal 5'-phosphate serves as cofactor.

The catalysed reaction is N(6)-[(R)-lipoyl]-L-lysyl-[glycine-cleavage complex H protein] + glycine + H(+) = N(6)-[(R)-S(8)-aminomethyldihydrolipoyl]-L-lysyl-[glycine-cleavage complex H protein] + CO2. Functionally, the glycine cleavage system catalyzes the degradation of glycine. The P protein binds the alpha-amino group of glycine through its pyridoxal phosphate cofactor; CO(2) is released and the remaining methylamine moiety is then transferred to the lipoamide cofactor of the H protein. The polypeptide is Glycine dehydrogenase (decarboxylating) (Bordetella avium (strain 197N)).